Reading from the N-terminus, the 1019-residue chain is Photoactivated adenylate cyclase subunit alpha-like protein FB (1019 aa).

Residues 55 to 148 form the BLUF 1 domain; the sequence is LRRLMYLSAS…GRLYGEWHMK (94 aa). The Guanylate cyclase 1 domain occupies 204-332; it reads VVTFIYLVEF…DCINTASRIT (129 aa). Residues 467-559 form the BLUF 2 domain; the sequence is LITLTYISQA…REYGSPLDMT (93 aa). Residues 615 to 744 enclose the Guanylate cyclase 2 domain; that stretch reads VLLATDICSF…EVSARVMEVV (130 aa). The span at 825–839 shows a compositional bias: low complexity; the sequence is APGRGAPAGGIPSSP. The disordered stretch occupies residues 825–862; that stretch reads APGRGAPAGGIPSSPKVRPPGRTNSVSSYTPDPNEALD. Residues 846-855 are compositionally biased toward polar residues; that stretch reads RTNSVSSYTP.

Belongs to the adenylyl cyclase class-4/guanylyl cyclase family. In terms of assembly, heterotetramer of two alpha and two beta subunits.

It is found in the cell projection. It localises to the cilium. The protein resides in the flagellum. In Euglena gracilis, this protein is Photoactivated adenylate cyclase subunit alpha-like protein FB.